We begin with the raw amino-acid sequence, 1083 residues long: Neisserial autotransporter lipoprotein NalP (1083 aa).

Positions 1–27 (MRTTPTFPTKTFKPTAMALAVATTLSA) are cleaved as a signal peptide. Cysteine 28 carries N-palmitoyl cysteine lipidation. Cysteine 28 carries S-diacylglycerol cysteine lipidation. A Peptidase S8 domain is found at 111 to 483 (NDAYKNLINL…WGLLDAGKAM (373 aa)). Residues aspartate 139, histidine 211, and serine 427 each act as charge relay system in the active site. One can recognise an Autotransporter domain in the interval 809–1083 (DGLDHNGTGL…SGRVGVGYRF (275 aa)). 12 consecutive transmembrane segments (beta stranded) span residues 819–828 (RVIAQTQQDG), 844–852 (TQTVGIAAK), 858–866 (TAAATLGMG), 883–891 (SLFAGIRHD), 897–906 (YLKGLFSYGR), 931–941 (QLGALGGVNVP), 948–958 (LTVEGGLRYDL), 984–994 (VGLAGLKLSQP), 1000–1010 (VLFATAGVERD), 1041–1052 (RLVAGLGADVEF), 1057–1066 (NGLARYSYAG), and 1074–1083 (SGRVGVGYRF).

The protein belongs to the peptidase S8 family. A fusion protein of the first 44 residues with beta-lactamase is lipidated in E.coli, strongly suggesting this is a lipoprotein in situ. The lipidated form is briefly retained on the cell surface which allows it to process its endogenous substrates on the cell surface before the passenger domain is released into the medium.

The protein localises to the cell outer membrane. The protein resides in the cell surface. Its subcellular location is the secreted. In terms of biological role, major human immunogenic protein. Autotransporter with a secreted protease domain involved in processing other autotransporter proteins including App and IgA. Probably autoprocesses to release the about 70 kDa passenger domain. Processes the lactoferrin receptor lipoprotein subunit (LbpB) extracellularly, releasing it from the cell surface. LbpB release protects bacteria against complement-mediated killing by anti-LbpB antibodies. Processes NHBA. Lipidation slows its auto-processing, probably allowing it to act on endogenous substrates on the cell surface before the passenger domain is released into the medium. The C-terminal beta-barrel domain inserts into the outer membrane where it probably exports the N-terminal passenger domain. Both the cell surface protein (Neisserial autotransporter lipoprotein NalP) and the passenger domain cleave human (host) complement factor C3, generating a shorter alpha chain and a longer beta chain than normal. Its function is as follows. Plays a role in extracellular-DNA (eDNA) mediated biofilm formation. In some strains (including cc32 strain H44/76 but not cc11 strain B16B6) eDNA stimulates biofilm formation. When NalP is not expressed (and no longer processes NHBA or IgA) biofilm formation increases. This is probably because the number of positively charged, DNA-binding peptides on the cell surface rises, resulting in increased biofilm formation. Cleaves human (host) complement factor C3, generating a shorter alpha chain and a longer beta chain than normal. Does not act on mouse or rabbit C3. Cleavage causes C3b degradation by human CFI and CFH, decreases deposition of C3b on the bacteria surface and probably facilitates complement escape. This is Neisserial autotransporter lipoprotein NalP from Neisseria meningitidis serogroup B / serotype 15 (strain H44/76).